A 379-amino-acid polypeptide reads, in one-letter code: Homoserine O-succinyltransferase (379 aa).

Residues 51 to 360 enclose the AB hydrolase-1 domain; the sequence is NAVLICHALS…DAPQGHDAFL (310 aa). Residue Ser-157 is the Nucleophile of the active site. Position 227 (Arg-227) interacts with substrate. Active-site residues include Asp-323 and His-356. Residue Asp-357 participates in substrate binding.

It belongs to the AB hydrolase superfamily. MetX family. Homodimer.

The protein localises to the cytoplasm. The catalysed reaction is L-homoserine + succinyl-CoA = O-succinyl-L-homoserine + CoA. Its pathway is amino-acid biosynthesis; L-methionine biosynthesis via de novo pathway; O-succinyl-L-homoserine from L-homoserine: step 1/1. Transfers a succinyl group from succinyl-CoA to L-homoserine, forming succinyl-L-homoserine. In Pseudomonas aeruginosa (strain UCBPP-PA14), this protein is Homoserine O-succinyltransferase.